Reading from the N-terminus, the 424-residue chain is Adenylosuccinate synthetase 1 (424 aa).

GTP is bound by residues 12-18 (GDEGKGK) and 40-42 (GHT). The active-site Proton acceptor is Asp13. Positions 13 and 40 each coordinate Mg(2+). Residues 13-16 (DEGK), 38-41 (NAGH), Thr127, Arg141, Thr236, and Arg304 each bind IMP. His41 acts as the Proton donor in catalysis. 300–306 (ARTGRPR) serves as a coordination point for substrate. GTP contacts are provided by residues Arg306, 332-334 (KLD), and 413-415 (GVG).

Belongs to the adenylosuccinate synthetase family. In terms of assembly, homodimer. The cofactor is Mg(2+).

The protein resides in the cytoplasm. It catalyses the reaction IMP + L-aspartate + GTP = N(6)-(1,2-dicarboxyethyl)-AMP + GDP + phosphate + 2 H(+). It functions in the pathway purine metabolism; AMP biosynthesis via de novo pathway; AMP from IMP: step 1/2. Its function is as follows. Plays an important role in the de novo pathway of purine nucleotide biosynthesis. Catalyzes the first committed step in the biosynthesis of AMP from IMP. This chain is Adenylosuccinate synthetase 1, found in Methanosarcina acetivorans (strain ATCC 35395 / DSM 2834 / JCM 12185 / C2A).